A 217-amino-acid polypeptide reads, in one-letter code: Proteasome subunit beta type-6-A like protein (217 aa).

Positions 1 to 16 (MERHLMDSQIKGVSTG) are cleaved as a propeptide — removed in mature form. Thr17 functions as the Nucleophile in the catalytic mechanism.

It belongs to the peptidase T1B family. The 26S proteasome consists of a 20S proteasome core and two 19S regulatory subunits. The 20S proteasome core is composed of 28 subunits that are arranged in four stacked rings, resulting in a barrel-shaped structure. The two end rings are each formed by seven alpha subunits, and the two central rings are each formed by seven beta subunits. The catalytic chamber with the active sites is on the inside of the barrel.

Its subcellular location is the cytoplasm. It localises to the nucleus. It catalyses the reaction Cleavage of peptide bonds with very broad specificity.. Functionally, the proteasome is a multicatalytic proteinase complex which is characterized by its ability to cleave peptides with Arg, Phe, Tyr, Leu, and Glu adjacent to the leaving group at neutral or slightly basic pH. The proteasome has an ATP-dependent proteolytic activity. This subunit is involved in antigen processing to generate class I binding peptides. The chain is Proteasome subunit beta type-6-A like protein (psmb6l-a) from Salmo salar (Atlantic salmon).